The primary structure comprises 484 residues: Schwannomin-interacting protein 1 (484 aa).

Over residues 1–28 the composition is skewed to basic and acidic residues; sequence MERSEQRVRAAWDCDPGKQADRDYREDG. Disordered regions lie at residues 1–74, 86–220, 232–258, and 305–350; these read MERS…VSAL, KKVI…PPMD, QFRE…ERES, and SGSD…ESLD. A compositionally biased stretch (low complexity) spans 33–67; it reads SDAGSSSSSRASSQSNSTKVTPCSECKSSSSPGGS. Residues 92-106 show a composition bias toward acidic residues; it reads WAPEEDGEEEEEEDD. Residues 107 to 120 show a composition bias toward basic and acidic residues; it reads RGYRDDGCPAREPG. Residues 123-137 are compositionally biased toward low complexity; it reads SARIGSSGSGSRSAA. Residues 150–159 show a composition bias toward basic and acidic residues; that stretch reads HPHDPQDLRH. Residues 239 to 252 show a composition bias toward polar residues; it reads RNQGQARTNSTSAQ. Positions 306–320 are enriched in basic and acidic residues; that stretch reads GSDKDSDADDSKTET. Positions 321–332 are enriched in polar residues; the sequence is SLDTPLSPMSKQ. The span at 341–350 shows a compositional bias: acidic residues; that stretch reads TTEEESESLD. A coiled-coil region spans residues 421–455; it reads IGQLQVIVNDLHSQIESLNEELVQLLLIRDELHTE.

It belongs to the SCHIP1 family. Homooligomer (via coiled coil domain). Interacts with NF2; the interaction is direct. Interacts with ANK3.

This Mus musculus (Mouse) protein is Schwannomin-interacting protein 1.